Consider the following 403-residue polypeptide: Adenylate cyclase (403 aa).

The segment covering 1 to 16 has biased composition (polar residues); sequence MSTEHTNTPRADSPQS. The segment at 1–37 is disordered; sequence MSTEHTNTPRADSPQSAAEAVRGARQHAPAATPAESD. A pyruvate binding region spans residues 31 to 60; that stretch reads ATPAESDPILELAEAMEGPLRIPAHTPEAV. The 110-residue stretch at 238–347 folds into the Guanylate cyclase domain; that stretch reads AVGFADLVSY…PTVNMAARLT (110 aa). Positions 243 and 287 each coordinate Mg(2+).

It belongs to the adenylyl cyclase class-3 family. As to quaternary structure, homodimer. It depends on Mg(2+) as a cofactor.

The protein resides in the cytoplasm. The enzyme catalyses ATP = 3',5'-cyclic AMP + diphosphate. With respect to regulation, pyruvate-stimulated. Its function is as follows. Plays essential roles in regulation of cellular metabolism by catalyzing the synthesis of a second messenger, cAMP. This chain is Adenylate cyclase (cya), found in Glutamicibacter nicotianae (Arthrobacter nicotianae).